The primary structure comprises 184 residues: Endoribonuclease YbeY (184 aa).

Residues His-146, His-150, and His-156 each contribute to the Zn(2+) site.

The protein belongs to the endoribonuclease YbeY family. Zn(2+) serves as cofactor.

Its subcellular location is the cytoplasm. Its function is as follows. Single strand-specific metallo-endoribonuclease involved in late-stage 70S ribosome quality control and in maturation of the 3' terminus of the 16S rRNA. This Nostoc sp. (strain PCC 7120 / SAG 25.82 / UTEX 2576) protein is Endoribonuclease YbeY.